Consider the following 313-residue polypeptide: Ribonuclease HIII (313 aa).

Positions 94 to 310 (MSVIGSDEVG…TQKAKRLVER (217 aa)) constitute an RNase H type-2 domain. Residues Asp100, Glu101, and Asp205 each contribute to the a divalent metal cation site.

It belongs to the RNase HII family. RnhC subfamily. Requires Mn(2+) as cofactor. The cofactor is Mg(2+).

It localises to the cytoplasm. It catalyses the reaction Endonucleolytic cleavage to 5'-phosphomonoester.. In terms of biological role, endonuclease that specifically degrades the RNA of RNA-DNA hybrids. This Bacillus velezensis (strain DSM 23117 / BGSC 10A6 / LMG 26770 / FZB42) (Bacillus amyloliquefaciens subsp. plantarum) protein is Ribonuclease HIII.